Here is a 213-residue protein sequence, read N- to C-terminus: MKNYYLVDEKRKTPVSTWEKISQTFRRSVKLELFVGLFVMMRELLKRNNSATIKYPFEKVKLDNRYRAVHRLMRFIESENERCIGCGLCEKICISNCIRMETSLDENGRKKVGNYSINLGRCIYCGFCAEVCPELAIVHGTEYENAAEQRSYFGYKQDFLTPIDKLKNQVEFEGAGSLRKDADLLVVKTPNYYDVMIERALENQDTQEQGENK.

2 4Fe-4S ferredoxin-type domains span residues 74-103 (RFIE…METS) and 113-142 (GNYS…HGTE). [4Fe-4S] cluster contacts are provided by Cys-83, Cys-86, Cys-89, Cys-93, Cys-122, Cys-125, Cys-128, and Cys-132.

This sequence belongs to the complex I 23 kDa subunit family. NDH-1 is composed of 14 different subunits. Subunits NuoA, H, J, K, L, M, N constitute the membrane sector of the complex. It depends on [4Fe-4S] cluster as a cofactor.

It is found in the cell inner membrane. It catalyses the reaction a quinone + NADH + 5 H(+)(in) = a quinol + NAD(+) + 4 H(+)(out). Its function is as follows. NDH-1 shuttles electrons from NADH, via FMN and iron-sulfur (Fe-S) centers, to quinones in the respiratory chain. The immediate electron acceptor for the enzyme in this species is believed to be ubiquinone. Couples the redox reaction to proton translocation (for every two electrons transferred, four hydrogen ions are translocated across the cytoplasmic membrane), and thus conserves the redox energy in a proton gradient. The polypeptide is NADH-quinone oxidoreductase subunit I (Campylobacter jejuni subsp. jejuni serotype O:6 (strain 81116 / NCTC 11828)).